Here is a 1840-residue protein sequence, read N- to C-terminus: Collagen alpha-1(V) chain (1840 aa).

Positions M1–A36 are cleaved as a signal peptide. The Laminin G-like domain maps to D72 to C244. Residues R231 to E445 are nonhelical region. 6 positions are modified to sulfotyrosine: Y234, Y236, Y240, Y262, Y263, and Y271. Disordered regions lie at residues P242–M523, F528–Q547, and G561–Q1576. The span at N258–G268 shows a compositional bias: acidic residues. Low complexity-rich tracts occupy residues D335–D352 and T376–N386. An interrupted collagenous region region spans residues G446–R560. Over residues P472–T487 the composition is skewed to pro residues. Positions L508 to M523 are enriched in low complexity. Low complexity predominate over residues G561 to P572. Positions G561 to G1572 are triple-helical region. A 4-hydroxyproline mark is found at P572, P578, and P623. At K629 the chain carries 5-hydroxylysine. P641 carries the 4-hydroxyproline modification. K644 is modified (5-hydroxylysine). 4-hydroxyproline is present on residues P650, P656, P659, P677, and P680. A compositionally biased stretch (low complexity) spans P673–P688. A 3-hydroxyproline mark is found at P682 and P688. The segment covering K689 to P698 has biased composition (pro residues). A 4-hydroxyproline mark is found at P692, P698, and P707. K710 is subject to 5-hydroxylysine. A 4-hydroxyproline mark is found at P719, P722, P728, and P734. A compositionally biased stretch (low complexity) spans Q724–P743. 5-hydroxylysine is present on K746. The span at L749–P758 shows a compositional bias: low complexity. A 4-hydroxyproline mark is found at P752, P758, P764, P767, and P773. Position 776 is a 5-hydroxylysine (K776). A 4-hydroxyproline mark is found at P782 and P791. 4 positions are modified to 5-hydroxylysine: K797, K806, K809, and K812. P818 bears the 4-hydroxyproline mark. K821 is subject to 5-hydroxylysine. P836 is subject to 4-hydroxyproline. Residues R839–K848 show a composition bias toward basic and acidic residues. 5-hydroxylysine is present on residues K848 and K866. P872, P875, and P878 each carry 4-hydroxyproline. K884 carries the post-translational modification 5-hydroxylysine. 4-hydroxyproline is present on residues P890 and P893. Residue K899 is modified to 5-hydroxylysine. P905 and P908 each carry 4-hydroxyproline. Positions P910–P919 are enriched in low complexity. 4-hydroxyproline is present on residues P932 and P947. Composition is skewed to low complexity over residues K973–T992 and V1001–M1013. P1019, P1022, P1025, and P1031 each carry 4-hydroxyproline. Low complexity predominate over residues S1090–P1106. A compositionally biased stretch (pro residues) spans R1108–P1117. P1223 and P1226 each carry 4-hydroxyproline. A compositionally biased stretch (low complexity) spans P1261–P1270. Residues G1296–G1305 are compositionally biased toward gly residues. 2 stretches are compositionally biased toward pro residues: residues T1382 to A1400 and S1456 to L1471. 4-hydroxyproline is present on residues P1469 and P1472. Residues P1487–P1496 show a composition bias toward low complexity. The segment covering P1528 to P1543 has biased composition (pro residues). Residues K1544–K1556 show a composition bias toward low complexity. The tract at residues E1573–A1607 is nonhelical region. Sulfotyrosine is present on residues Y1603 and Y1606. The region spanning E1611–L1839 is the Fibrillar collagen NC1 domain.

This sequence belongs to the fibrillar collagen family. As to quaternary structure, trimers of two alpha 1(V) and one alpha 2(V) chains in most tissues and trimers of one alpha 1(V), one alpha 2(V), and one alpha 3(V) chains in placenta. Interacts with CSPG4. Post-translationally, hydroxylation on proline residues within the sequence motif, GXPG, is most likely to be 4-hydroxy as this fits the requirement for 4-hydroxylation in vertebrates. Sulfated on 40% of tyrosines. Ubiquitously expressed.

Its subcellular location is the secreted. The protein resides in the extracellular space. It localises to the extracellular matrix. Type V collagen is a member of group I collagen (fibrillar forming collagen). It is a minor connective tissue component of nearly ubiquitous distribution. Type V collagen binds to DNA, heparan sulfate, thrombospondin, heparin, and insulin. This Cricetulus longicaudatus (Long-tailed dwarf hamster) protein is Collagen alpha-1(V) chain (COL5A1).